The following is a 143-amino-acid chain: Large ribosomal subunit protein uL11 (143 aa).

It belongs to the universal ribosomal protein uL11 family. Part of the ribosomal stalk of the 50S ribosomal subunit. Interacts with L10 and the large rRNA to form the base of the stalk. L10 forms an elongated spine to which L12 dimers bind in a sequential fashion forming a multimeric L10(L12)X complex. One or more lysine residues are methylated.

Forms part of the ribosomal stalk which helps the ribosome interact with GTP-bound translation factors. The sequence is that of Large ribosomal subunit protein uL11 from Teredinibacter turnerae (strain ATCC 39867 / T7901).